The sequence spans 384 residues: tRNA(Met) cytidine acetate ligase (384 aa).

Residues Val-7 to Leu-20, Gly-101, Asn-153, and Arg-178 each bind ATP.

Belongs to the TmcAL family.

The protein localises to the cytoplasm. It catalyses the reaction cytidine(34) in elongator tRNA(Met) + acetate + ATP = N(4)-acetylcytidine(34) in elongator tRNA(Met) + AMP + diphosphate. In terms of biological role, catalyzes the formation of N(4)-acetylcytidine (ac(4)C) at the wobble position of elongator tRNA(Met), using acetate and ATP as substrates. First activates an acetate ion to form acetyladenylate (Ac-AMP) and then transfers the acetyl group to tRNA to form ac(4)C34. The chain is tRNA(Met) cytidine acetate ligase from Lactobacillus delbrueckii subsp. bulgaricus (strain ATCC 11842 / DSM 20081 / BCRC 10696 / JCM 1002 / NBRC 13953 / NCIMB 11778 / NCTC 12712 / WDCM 00102 / Lb 14).